We begin with the raw amino-acid sequence, 1402 residues long: Roundabout homolog 3 (1402 aa).

A signal peptide spans 1-20; it reads MLRYLLKTLLQMNLFADSLA. At 21 to 891 the chain is on the extracellular side; it reads RDISNSSELL…ERLAKVLRKP (871 aa). 3 N-linked (GlcNAc...) asparagine glycosylation sites follow: Asn25, Asn34, and Asn53. Ig-like C2-type domains are found at residues 64–160, 166–253, 258–342, 347–440, and 450–531; these read PRIV…ASLE, DDFR…AELV, PSFL…GSLS, PQFV…ALLE, and PPII…GEAT. Residues Cys85 and Cys143 are joined by a disulfide bond. An N-linked (GlcNAc...) asparagine glycan is attached at Asn156. Cystine bridges form between Cys187–Cys236 and Cys279–Cys326. N-linked (GlcNAc...) asparagine glycosylation is found at Asn355, Asn363, Asn410, Asn459, and Asn503. Cysteines 368 and 424 form a disulfide. Cysteines 472 and 521 form a disulfide. 2 disordered regions span residues 540-561 and 639-662; these read EDWG…PPSQ and EPSP…EDPW. Residues 543-552 are compositionally biased toward low complexity; sequence GASPGPATGP. Fibronectin type-III domains follow at residues 558 to 652, 672 to 766, and 771 to 869; these read PPSQ…TQDS, AVRM…IPEE, and PPQG…FPPA. Residues 646 to 655 are compositionally biased toward polar residues; it reads PVQTQDSSLS. 3 N-linked (GlcNAc...) asparagine glycosylation sites follow: Asn784, Asn813, and Asn820. Residues 892–912 traverse the membrane as a helical segment; the sequence is AFLAGSSAACGALLLGFCAAL. Over 913 to 1402 the chain is Cytoplasmic; sequence YRRQKQRKEL…PGRNRREEPR (490 aa). 3 disordered regions span residues 965-989, 1032-1307, and 1340-1402; these read SWPH…NPDP, FHGG…VVQA, and GRPS…EEPR. Composition is skewed to polar residues over residues 1038–1049 and 1142–1152; these read QHSSGDPSTWSQ and PSPTSSYGQQS. Over residues 1158 to 1169 the composition is skewed to pro residues; sequence PSPPDPPQPPTD. 2 stretches are compositionally biased toward low complexity: residues 1178–1191 and 1215–1228; these read RRVP…LSVS and ASPS…SSAP. Positions 1243-1254 are enriched in basic residues; the sequence is HGHRARIRKKPK. Ser1263 carries the post-translational modification Phosphoserine. Positions 1294 to 1304 are enriched in basic and acidic residues; that stretch reads LERERSGERRV. Residues 1346–1357 show a composition bias toward polar residues; it reads SHGQGTSTCSTA. A compositionally biased stretch (low complexity) spans 1358–1371; it reads GSNSSRGSNSSRGS.

Belongs to the immunoglobulin superfamily. ROBO family. As to quaternary structure, interacts (via Fibronectin type-III 1 domain) with NELL2 (via the EGF domains) with a 3:3 stoichiometry; this interaction promotes oligomerization of ROBO3 resulting in the repulsion of commissural axons in the midline. As to expression, detected in embryonal spinal cord and hindbrain.

Its subcellular location is the membrane. Functionally, receptor involved in axon guidance during development. Acts as a multifunctional regulator of pathfinding that simultaneously mediates NELL2 repulsion, inhibits SLIT repulsion, and facilitates Netrin-1/NTN1 attraction. In spinal cord development plays a role in guiding commissural axons probably by preventing premature sensitivity to Slit proteins thus inhibiting Slit signaling through ROBO1/ROBO2. Binding OF NELL2 to the receptor ROBO3 promotes oligomerization of ROBO3, resulting in the repulsion of commissural axons in the midline. ROBO3 also indirectly boosts axon attraction to NTN1 without interacting with NTN1 itself. Its function is as follows. Mediates NELL2 premature repulsion of commissural axons during midline crossing. In terms of biological role, after midline crossing by the commissural axons, may, in concert with ROBO1 and ROBO2, prevent midline recrossing. Does not mediate NELL2 signaling. The chain is Roundabout homolog 3 from Mus musculus (Mouse).